The chain runs to 247 residues: Adenosine 5'-phosphosulfate reductase (247 aa).

[4Fe-4S] cluster contacts are provided by cysteine 133, cysteine 134, cysteine 216, and cysteine 219. Residues 222–247 are disordered; sequence KPAPGSDPRSGRWAGQAKTECGLHAS. Cysteine 242 serves as the catalytic Nucleophile; cysteine thiosulfonate intermediate.

The protein belongs to the PAPS reductase family. CysH subfamily. [4Fe-4S] cluster is required as a cofactor.

The protein resides in the cytoplasm. It catalyses the reaction [thioredoxin]-disulfide + sulfite + AMP + 2 H(+) = adenosine 5'-phosphosulfate + [thioredoxin]-dithiol. It participates in sulfur metabolism; hydrogen sulfide biosynthesis; sulfite from sulfate. Its function is as follows. Catalyzes the formation of sulfite from adenosine 5'-phosphosulfate (APS) using thioredoxin as an electron donor. This is Adenosine 5'-phosphosulfate reductase from Rhodococcus opacus (strain B4).